We begin with the raw amino-acid sequence, 200 residues long: Dephospho-CoA kinase (200 aa).

The DPCK domain maps to 3–200 (IFGLTGGIGS…LNVNNKCNMD (198 aa)). ATP is bound at residue 11–16 (GSGKSL).

Belongs to the CoaE family.

Its subcellular location is the cytoplasm. The enzyme catalyses 3'-dephospho-CoA + ATP = ADP + CoA + H(+). It participates in cofactor biosynthesis; coenzyme A biosynthesis; CoA from (R)-pantothenate: step 5/5. Its function is as follows. Catalyzes the phosphorylation of the 3'-hydroxyl group of dephosphocoenzyme A to form coenzyme A. This chain is Dephospho-CoA kinase, found in Ehrlichia canis (strain Jake).